The chain runs to 459 residues: Elongation factor 1-alpha 4 (459 aa).

The tr-type G domain occupies K5 to T242. Residues G14–S21 are G1. The interval G70–D74 is G2. Positions D91–G94 are G3. Positions N153–D156 are G4. Residues S194 to F196 are G5. 5-glutamyl glycerylphosphorylethanolamine is present on residues E301 and E374.

It belongs to the TRAFAC class translation factor GTPase superfamily. Classic translation factor GTPase family. EF-Tu/EF-1A subfamily.

It is found in the cytoplasm. This protein promotes the GTP-dependent binding of aminoacyl-tRNA to the A-site of ribosomes during protein biosynthesis. This chain is Elongation factor 1-alpha 4 (eft-4), found in Oscheius tipulae.